We begin with the raw amino-acid sequence, 168 residues long: uncharacterized protein (168 aa).

Disordered stretches follow at residues 37-74 (GGSK…SQFT), 81-100 (QYNY…PNYY), and 117-168 (MQPF…EETN). 2 stretches are compositionally biased toward polar residues: residues 52-74 (HSGQ…SQFT) and 82-95 (YNYN…TRSV). Positions 120–129 (FNNQSFNNQS) are enriched in low complexity. A compositionally biased stretch (polar residues) spans 130-158 (RTHQSKTYQHNQQKRSFNGPRNNGPQNNV).

This is an uncharacterized protein from Acanthamoeba polyphaga (Amoeba).